Here is a 242-residue protein sequence, read N- to C-terminus: ADP-dependent L-serine kinase SerK (242 aa).

Glu30 is an active-site residue. Positions 43, 49, 51, and 52 each coordinate ADP. Position 68 (Val68) interacts with O-phospho-L-serine. The ADP site is built by Asp69, Gly70, His71, His72, and Arg73. Residue Asp69 coordinates Mg(2+). Residues Gly70, His71, and His72 each contribute to the O-phospho-L-serine site. O-phospho-L-serine contacts are provided by Trp102, Lys221, Thr223, and His225.

Belongs to the SerK family. Mg(2+) is required as a cofactor.

It carries out the reaction L-serine + ADP = O-phospho-L-serine + AMP + H(+). The protein operates within amino-acid biosynthesis; L-cysteine biosynthesis; L-cysteine from L-serine: step 1/2. Free serine kinase that uses ADP to phosphorylate L-serine to yield O-phospho-L-serine and AMP. This Thermococcus kodakarensis (strain ATCC BAA-918 / JCM 12380 / KOD1) (Pyrococcus kodakaraensis (strain KOD1)) protein is ADP-dependent L-serine kinase SerK.